The chain runs to 132 residues: Small ribosomal subunit protein uS8c (132 aa).

The protein belongs to the universal ribosomal protein uS8 family. As to quaternary structure, part of the 30S ribosomal subunit.

It localises to the plastid. It is found in the chloroplast. In terms of biological role, one of the primary rRNA binding proteins, it binds directly to 16S rRNA central domain where it helps coordinate assembly of the platform of the 30S subunit. This Thalassiosira pseudonana (Marine diatom) protein is Small ribosomal subunit protein uS8c (rps8).